Reading from the N-terminus, the 2515-residue chain is Nonribosomal peptide synthetase tpzA (2515 aa).

Residues 246–648 (ELATRQPGAQ…GRMGTQVKLR (403 aa)) are adenylation 1. Residues 794-867 (SEVEHLIHAI…DMATVALKTS (74 aa)) form the Carrier 1 domain. At Ser-828 the chain carries O-(pantetheine 4'-phosphoryl)serine. A condensation 1 region spans residues 924 to 1332 (DAYPCSPLQE…IRSVPHITPE (409 aa)). The segment at 1357-1758 (RKQSQETPSA…GRMNDQIKLR (402 aa)) is adenylation 2. Residues 1900–1976 (LATTNEERTL…AILSHLTGRK (77 aa)) form the Carrier 2 domain. At Ser-1937 the chain carries O-(pantetheine 4'-phosphoryl)serine. The segment at 2013-2431 (VEDIYPCGPI…LGILPPEEQK (419 aa)) is condensation 2. Positions 2436–2512 (PSLSAAVVRL…AMARRSLVVS (77 aa)) constitute a Carrier 3 domain. The residue at position 2473 (Ser-2473) is an O-(pantetheine 4'-phosphoryl)serine.

It belongs to the NRP synthetase family.

It functions in the pathway secondary metabolite biosynthesis. In terms of biological role, nonribosomal peptide synthetase; part of the gene cluster that mediates the biosynthesis of terreazepine,. The first step of terreazepine biosynthesis is catalyzed by the indoleamine 2,3-dioxygenase tpzB which produces N-formyl-kynurenine through the catabolism of tryptophan. The two-module NRPS tpzA then utilizes anthranilate and kynurenine to assemble terreazepine. The first adenylation domain of tpzA (A1) loads anthranilate onto the T1 domain, while A2 loads kynurenine, generated through spontaneous nonenzymatic deformylation of the tzpB-supplied N-formyl-kynurenine. TpzA produces a 2:1 mixture of S-R enantiomers, which suggests that the A2 domain accepts both D- and L-kynurenine. The peptide bond formation between the tethered amino acids is catalyzed by the first condensation domain (C1) between anthranilate's carbonyl carbon and kynurenine's aliphatic primary amine. The second C domain (C2) catalyzes the final cyclization event between the aromatic amine of kynurenine and the tethered carbonyl carbon, yielding the final terreazepine product. The T3 domain may facilitate the interaction with downstream tailoring enzymes. In Aspergillus terreus (strain NIH 2624 / FGSC A1156), this protein is Nonribosomal peptide synthetase tpzA.